A 471-amino-acid chain; its full sequence is MTELPDSTRWQLWIVAFGFFMQSLDTTIVNTALPSMAQSLGESPLHMHMVIVSYVLTVAVMLPASGWLADKVGVRNIFFTAIVLFTLGSLFCALSGTLNELLLARALQGVGGAMMVPVGRLTVMKIVPREQYMAAMTFVTLPGQVGPLLGPALGGLLVEYASWHWIFLINIPVGIIGAIATLLLMPNYTMQTRRFDLSGFLLLAVGMAVLTLALDGSKGTGLSPLAIAGLVAVGVVALVLYLLHARNNNRALFSLKLFRTRTFSLGLAGSFAGRIGSGMLPFMTPVFLQIGLGFSPFHAGLMMIPMVLGSMGMKRIVVQVVNRFGYRRVLVATTLGLSLITLLFMTTALLGWYYVLPFVLFLQGMVNSTRFSSMNTLTLKDLPDNLASSGNSLLSMIMQLSMSIGVTIAGLLLGLFGSQHVSVDSGTTQTVFMYTWLSMAFIIALPAFIFARVPNDTHQNVAISRRKRSAQ.

The Periplasmic portion of the chain corresponds to 1–11; sequence MTELPDSTRWQ. The chain crosses the membrane as a helical span at residues 12–32; it reads LWIVAFGFFMQSLDTTIVNTA. The Cytoplasmic segment spans residues 33-48; that stretch reads LPSMAQSLGESPLHMH. The helical transmembrane segment at 49 to 69 threads the bilayer; the sequence is MVIVSYVLTVAVMLPASGWLA. Topologically, residues 70–76 are periplasmic; the sequence is DKVGVRN. Residues 77–97 traverse the membrane as a helical segment; the sequence is IFFTAIVLFTLGSLFCALSGT. Residues 98–101 lie on the Cytoplasmic side of the membrane; that stretch reads LNEL. A helical transmembrane segment spans residues 102–124; the sequence is LLARALQGVGGAMMVPVGRLTVM. Residues 125-137 lie on the Periplasmic side of the membrane; the sequence is KIVPREQYMAAMT. Residues 138–158 form a helical membrane-spanning segment; the sequence is FVTLPGQVGPLLGPALGGLLV. Over 159–164 the chain is Cytoplasmic; it reads EYASWH. The chain crosses the membrane as a helical span at residues 165–185; the sequence is WIFLINIPVGIIGAIATLLLM. The Periplasmic portion of the chain corresponds to 186–196; it reads PNYTMQTRRFD. Residues 197-217 traverse the membrane as a helical segment; sequence LSGFLLLAVGMAVLTLALDGS. Over 218-224 the chain is Cytoplasmic; the sequence is KGTGLSP. Residues 225 to 245 form a helical membrane-spanning segment; sequence LAIAGLVAVGVVALVLYLLHA. Topologically, residues 246–262 are periplasmic; it reads RNNNRALFSLKLFRTRT. Residues 263 to 283 form a helical membrane-spanning segment; it reads FSLGLAGSFAGRIGSGMLPFM. Residues 284–285 are Cytoplasmic-facing; sequence TP. The helical transmembrane segment at 286-306 threads the bilayer; the sequence is VFLQIGLGFSPFHAGLMMIPM. Residues 307–341 lie on the Periplasmic side of the membrane; sequence VLGSMGMKRIVVQVVNRFGYRRVLVATTLGLSLIT. The helical transmembrane segment at 342–362 threads the bilayer; sequence LLFMTTALLGWYYVLPFVLFL. At 363–395 the chain is on the cytoplasmic side; that stretch reads QGMVNSTRFSSMNTLTLKDLPDNLASSGNSLLS. A helical transmembrane segment spans residues 396–416; it reads MIMQLSMSIGVTIAGLLLGLF. At 417–430 the chain is on the periplasmic side; it reads GSQHVSVDSGTTQT. Residues 431-451 traverse the membrane as a helical segment; it reads VFMYTWLSMAFIIALPAFIFA. Over 452 to 471 the chain is Cytoplasmic; that stretch reads RVPNDTHQNVAISRRKRSAQ.

It belongs to the major facilitator superfamily. TCR/Tet family.

It localises to the cell inner membrane. The protein is Putative multidrug resistance protein MdtD of Shigella sonnei (strain Ss046).